We begin with the raw amino-acid sequence, 372 residues long: MSNKDIRVVVGMSGGVDSSVTAHVLKEQGYDVIGIFMKNWDDTDENGVCTATEDYNDVIEVCNQIGIPYYAVNFEKEYWDKVFTYFLDEYKKGRTPNPDVMCNKEIKFKAFLDHAMNLGADYVATGHYARIHRHEDGHVEMLRGVDNNKDQTYFLNQLSQQQLSKVMFPIGDIEKSEVRRIAEEQGLVTAKKKDSTGICFIGEKNFKTFLSQYLPAQPGDMITLDGKKMGKHSGLMYYTIGQRHGLGIGGDGDPWFVVGKNLKDNVLYVEQGFHHDALYSDYLIASDYSFVNPEDNDLDQGFECTAKFRYRQKDTKVFVKRENDHALRVTFAEPVRAITPGQAVVFYQGDVCLGGAIIDDVFKNEGQLNYVV.

ATP is bound by residues 11–18 (GMSGGVDS) and methionine 37. Residues 97 to 99 (NPD) form an interaction with target base in tRNA region. The active-site Nucleophile is the cysteine 102. An intrachain disulfide couples cysteine 102 to cysteine 199. Glycine 126 contributes to the ATP binding site. Positions 149–151 (KDQ) are interaction with tRNA. Cysteine 199 (cysteine persulfide intermediate) is an active-site residue. The interval 309–310 (RY) is interaction with tRNA.

Belongs to the MnmA/TRMU family.

Its subcellular location is the cytoplasm. The catalysed reaction is S-sulfanyl-L-cysteinyl-[protein] + uridine(34) in tRNA + AH2 + ATP = 2-thiouridine(34) in tRNA + L-cysteinyl-[protein] + A + AMP + diphosphate + H(+). Functionally, catalyzes the 2-thiolation of uridine at the wobble position (U34) of tRNA, leading to the formation of s(2)U34. In Staphylococcus aureus (strain bovine RF122 / ET3-1), this protein is tRNA-specific 2-thiouridylase MnmA.